The chain runs to 313 residues: Pyrimidine-specific ribonucleoside hydrolase RihB (313 aa).

Catalysis depends on aspartate 11, which acts as the Proton acceptor. Ca(2+)-binding residues include aspartate 11, aspartate 16, and valine 124. Positions 227 and 239 each coordinate substrate. Aspartate 240 is a Ca(2+) binding site.

This sequence belongs to the IUNH family. RihB subfamily. In terms of assembly, homotetramer. The cofactor is Ca(2+).

It catalyses the reaction a pyrimidine ribonucleoside + H2O = a pyrimidine nucleobase + D-ribose. Hydrolyzes cytidine or uridine to ribose and cytosine or uracil, respectively. Has a clear preference for cytidine over uridine. Strictly specific for ribonucleosides. This Escherichia coli (strain K12 / DH10B) protein is Pyrimidine-specific ribonucleoside hydrolase RihB.